The following is a 192-amino-acid chain: Protein GrpE (192 aa).

Residues 1-43 (MQENKQPSEIQGELPQPPDGESVPPQPTNEQAPPDTDTMPRIE) are disordered.

Belongs to the GrpE family. Homodimer.

It is found in the cytoplasm. In terms of biological role, participates actively in the response to hyperosmotic and heat shock by preventing the aggregation of stress-denatured proteins, in association with DnaK and GrpE. It is the nucleotide exchange factor for DnaK and may function as a thermosensor. Unfolded proteins bind initially to DnaJ; upon interaction with the DnaJ-bound protein, DnaK hydrolyzes its bound ATP, resulting in the formation of a stable complex. GrpE releases ADP from DnaK; ATP binding to DnaK triggers the release of the substrate protein, thus completing the reaction cycle. Several rounds of ATP-dependent interactions between DnaJ, DnaK and GrpE are required for fully efficient folding. The polypeptide is Protein GrpE (Aromatoleum aromaticum (strain DSM 19018 / LMG 30748 / EbN1) (Azoarcus sp. (strain EbN1))).